The sequence spans 321 residues: Glucokinase (321 aa).

ATP is bound at residue 8–13; the sequence is GDVGGT.

The protein belongs to the bacterial glucokinase family.

The protein localises to the cytoplasm. It carries out the reaction D-glucose + ATP = D-glucose 6-phosphate + ADP + H(+). In Salmonella heidelberg (strain SL476), this protein is Glucokinase.